Here is a 252-residue protein sequence, read N- to C-terminus: Curing of [URE3] protein 1 (252 aa).

It is found in the nucleus. Its function is as follows. Involved in the curing of prion [URE3]. Nuclear localization of this protein may suggest a role in transcription regulation, so it might exert an effect on [URE3] through known prion-curing chaperones or BTN2. The sequence is that of Curing of [URE3] protein 1 (CUR1) from Saccharomyces cerevisiae (strain ATCC 204508 / S288c) (Baker's yeast).